We begin with the raw amino-acid sequence, 445 residues long: MSDYLSVSALTKYIKYKFDQDPHLQSVLIKGELSNFKKHSSGHLYFNVKDKESVISAMMFKGSASKLNFEPKEGDEVLLEARVSVFERRGNYQIYVNKMQLDGIGNLYQKLEALKKKLTEEGCFDKANKKSIPKFPKKIAVLTASTGAAIRDIHSTINSRFPLAEQIQISTLVQGEKAKDDIIEKIEYADSLGVDTIIVGRGGGSIEDLWNFNEEAVVRAIYNCKTPIISAVGHETDFTLSDFAADIRAATPTQAAVIATPDQYELLQQIQQYQFTLTRFIKKHLEQQRKHIEHLSSYYKFKQPTLLYDQQIQRRDDLEKRLKQQIQATFEQQRHRLMLLQQRYNLKALLSSVNQEQQNNLQLTNQLVKLLNSKILSYKNDLKNKVENLNNLSPTNTMLRGYAIVNKKDEVITSTKDLTENDQLTLTMKDGLVDAKVTKVRCNND.

This sequence belongs to the XseA family. Heterooligomer composed of large and small subunits.

It is found in the cytoplasm. The catalysed reaction is Exonucleolytic cleavage in either 5'- to 3'- or 3'- to 5'-direction to yield nucleoside 5'-phosphates.. In terms of biological role, bidirectionally degrades single-stranded DNA into large acid-insoluble oligonucleotides, which are then degraded further into small acid-soluble oligonucleotides. This is Exodeoxyribonuclease 7 large subunit from Staphylococcus aureus (strain bovine RF122 / ET3-1).